The sequence spans 218 residues: 1-Cys peroxiredoxin PER1 (218 aa).

Positions 4 to 164 (LTIGDTVPNL…VVRAVDSLLT (161 aa)) constitute a Thioredoxin domain. Residue Cys-46 is the Cysteine sulfenic acid (-SOH) intermediate of the active site. The Bipartite nuclear localization signal motif lies at 194–217 (KKMFPQGFETADLPSKKGYLRFTK).

Belongs to the peroxiredoxin family. Prx6 subfamily. As to expression, embryo and aleurone cells.

The protein localises to the nucleus. The protein resides in the cytoplasm. The enzyme catalyses a hydroperoxide + [thioredoxin]-dithiol = an alcohol + [thioredoxin]-disulfide + H2O. Its function is as follows. Thiol-specific peroxidase that catalyzes the reduction of hydrogen peroxide and organic hydroperoxides to water and alcohols, respectively. Seems to contribute to the inhibition of germination during stress. The chain is 1-Cys peroxiredoxin PER1 (PER1) from Hordeum vulgare (Barley).